A 231-amino-acid polypeptide reads, in one-letter code: L-ribulose-5-phosphate 4-epimerase (231 aa).

Substrate is bound by residues 27–28 (GN), 44–45 (SG), and 73–74 (SS). Zn(2+)-binding residues include Asp75, His94, and His96. Asp119 functions as the Proton donor/acceptor in the catalytic mechanism. His168 serves as a coordination point for Zn(2+). The active-site Proton donor/acceptor is the Tyr226.

Belongs to the aldolase class II family. AraD/FucA subfamily. It depends on Zn(2+) as a cofactor.

The catalysed reaction is L-ribulose 5-phosphate = D-xylulose 5-phosphate. It functions in the pathway carbohydrate degradation; L-arabinose degradation via L-ribulose; D-xylulose 5-phosphate from L-arabinose (bacterial route): step 3/3. Functionally, involved in the degradation of L-arabinose. Catalyzes the interconversion of L-ribulose 5-phosphate (LRu5P) and D-xylulose 5-phosphate (D-Xu5P) via a retroaldol/aldol mechanism (carbon-carbon bond cleavage analogous to a class II aldolase reaction). This chain is L-ribulose-5-phosphate 4-epimerase (araD), found in Halalkalibacterium halodurans (strain ATCC BAA-125 / DSM 18197 / FERM 7344 / JCM 9153 / C-125) (Bacillus halodurans).